The following is a 116-amino-acid chain: MSAVAEAPLPIQMTDAAANKVKTLITEEENPELKLRVYITGGGCSGFQYGFTFDEKINEGDTVVEKSGVTMVIDPMSLQYLVGGSVDYTEGLEGSRFTVTNPNATTTCGCGSSFSI.

Iron-sulfur cluster-binding residues include cysteine 44, cysteine 108, and cysteine 110.

This sequence belongs to the HesB/IscA family. Homodimer. Iron-sulfur cluster is required as a cofactor.

Functionally, required for insertion of 4Fe-4S clusters for at least IspG. This chain is Iron-sulfur cluster insertion protein ErpA, found in Aeromonas hydrophila subsp. hydrophila (strain ATCC 7966 / DSM 30187 / BCRC 13018 / CCUG 14551 / JCM 1027 / KCTC 2358 / NCIMB 9240 / NCTC 8049).